The following is a 239-amino-acid chain: Homeobox-leucine zipper protein HOX12 (239 aa).

The segment at 22-65 (PEAATSGGEQKKARQRRRRKVKPEAAAALAGESGGDEQAKKRRL) is disordered. The homeobox DNA-binding region spans 58 to 117 (EQAKKRRLSDEQARFLEMSFKKERKLETPRKVQLAAELGLDAKQVAVWFQNRRARHKSKL). A coiled-coil region spans residues 107-168 (QNRRARHKSK…KLAAVAAATT (62 aa)).

It belongs to the HD-ZIP homeobox family. Class I subfamily. In terms of tissue distribution, expressed in seedlings, roots, stems, leaf sheaths and panicles.

Its subcellular location is the nucleus. Its function is as follows. Probable transcription factor. This is Homeobox-leucine zipper protein HOX12 (HOX12) from Oryza sativa subsp. indica (Rice).